The following is a 350-amino-acid chain: GTPase Obg (350 aa).

The Obg domain maps to 1-159 (MKLVDEAEIL…RLLKLELKLL (159 aa)). In terms of domain architecture, OBG-type G spans 160–337 (ADVGLLGFPN…IMKDVMAFFD (178 aa)). GTP contacts are provided by residues 166 to 173 (GFPNAGKS), 191 to 195 (FTTLY), 213 to 216 (DVPG), 287 to 290 (NKAD), and 318 to 320 (SAL). 2 residues coordinate Mg(2+): S173 and T193.

Belongs to the TRAFAC class OBG-HflX-like GTPase superfamily. OBG GTPase family. As to quaternary structure, monomer. The cofactor is Mg(2+).

It localises to the cytoplasm. An essential GTPase which binds GTP, GDP and possibly (p)ppGpp with moderate affinity, with high nucleotide exchange rates and a fairly low GTP hydrolysis rate. Plays a role in control of the cell cycle, stress response, ribosome biogenesis and in those bacteria that undergo differentiation, in morphogenesis control. The protein is GTPase Obg of Xanthomonas campestris pv. campestris (strain 8004).